The sequence spans 1340 residues: Iron-sulfur cluster assembly protein SufD (1340 aa).

The segment covering 477–487 (NSLKHNNNNTK) has biased composition (low complexity). Disordered regions lie at residues 477–498 (NSLK…ERSS), 723–743 (HGKD…NYLN), 765–794 (NVST…QSTV), 835–865 (EKNE…GEKK), and 992–1055 (NIPT…NNIQ). The segment covering 723–734 (HGKDNTQHDDKN) has biased composition (basic and acidic residues). A compositionally biased stretch (polar residues) spans 782 to 794 (NPDTETNNEQSTV). Residues 1022–1037 (DNLLQNDQATNSNVEI) show a composition bias toward polar residues.

It belongs to the iron-sulfur cluster assembly SufBD family. Component of a complex composed of SufB, SufC and SufD in a stoichiometric ratio of 1:2:1. Interacts with SufB. Interacts with SufC; the interaction enhances the ATPase activity of SufC.

Its subcellular location is the plastid. The protein localises to the apicoplast. Its pathway is cofactor biosynthesis; iron-sulfur cluster biosynthesis. In terms of biological role, participates in the sulfur mobilization (SUF) pathway for iron-sulfur (Fe-S) cluster biogenesis. As part of a complex consisting of SufB-SufC(2)-SufD, involved in assembly of [4Fe-4S] clusters. Enhances the ATPase activity of SufC. This is Iron-sulfur cluster assembly protein SufD from Plasmodium berghei (strain Anka).